Here is a 90-residue protein sequence, read N- to C-terminus: PqqA binding protein 2 (90 aa).

It belongs to the PqqD family. As to quaternary structure, monomer. Interacts with PqqE.

Its pathway is cofactor biosynthesis; pyrroloquinoline quinone biosynthesis. Its function is as follows. Functions as a PqqA binding protein and presents PqqA to PqqE, in the pyrroloquinoline quinone (PQQ) biosynthetic pathway. The polypeptide is PqqA binding protein 2 (pqqD2) (Pseudomonas putida (strain ATCC 47054 / DSM 6125 / CFBP 8728 / NCIMB 11950 / KT2440)).